A 958-amino-acid polypeptide reads, in one-letter code: Probable protein phosphatase DDB_G0282105 (958 aa).

The next 2 helical transmembrane spans lie at Val2 to Val22 and Phe26 to Phe46. A coiled-coil region spans residues Ser142–Ser330. Positions Gln312–Ser328 are enriched in basic and acidic residues. 5 disordered regions span residues Gln312–Ile361, Ser380–Lys421, His445–Ile475, Ile491–Pro525, and Asn619–Lys659. 5 stretches are compositionally biased toward low complexity: residues Ser329 to Ile361, Ser390 to Arg401, Thr452 to Ile475, Ile491 to Ser515, and Asn619 to Lys655. Residues Asn613 to Glu666 are a coiled coil. A PPM-type phosphatase domain is found at Lys675–Leu958. Residues Asp722, Gly723, Asp905, and Asp949 each contribute to the Mn(2+) site.

The protein in the C-terminal section; belongs to the PP2C family. Mg(2+) serves as cofactor. The cofactor is Mn(2+).

It is found in the membrane. It catalyses the reaction O-phospho-L-seryl-[protein] + H2O = L-seryl-[protein] + phosphate. The catalysed reaction is O-phospho-L-threonyl-[protein] + H2O = L-threonyl-[protein] + phosphate. The chain is Probable protein phosphatase DDB_G0282105 from Dictyostelium discoideum (Social amoeba).